The following is a 142-amino-acid chain: Large ribosomal subunit protein uL11 (142 aa).

This sequence belongs to the universal ribosomal protein uL11 family. As to quaternary structure, part of the ribosomal stalk of the 50S ribosomal subunit. Interacts with L10 and the large rRNA to form the base of the stalk. L10 forms an elongated spine to which L12 dimers bind in a sequential fashion forming a multimeric L10(L12)X complex. Post-translationally, one or more lysine residues are methylated.

Functionally, forms part of the ribosomal stalk which helps the ribosome interact with GTP-bound translation factors. This Lachnoclostridium phytofermentans (strain ATCC 700394 / DSM 18823 / ISDg) (Clostridium phytofermentans) protein is Large ribosomal subunit protein uL11.